A 467-amino-acid chain; its full sequence is Serine/threonine-protein kinase SSN3 (467 aa).

Composition is skewed to polar residues over residues 1–12 (MSFSNLPPSSGR) and 29–39 (GSSSFTANNPS). Positions 1–45 (MSFSNLPPSSGRGSHADGASGRSMPPFPGSSSFTANNPSKGIHPN) are disordered. The Protein kinase domain maps to 79–408 (YLIVGFISSG…AKEALNHPYF (330 aa)). ATP contacts are provided by residues 85–93 (ISSGTYGRV) and lysine 109. The active-site Proton acceptor is the aspartate 211. Residues 426-467 (YPNRRVSQDDNDIRSGSLPGTKRSGLPDDTLTSRAAKRAREM) form a disordered region.

Belongs to the protein kinase superfamily. CMGC Ser/Thr protein kinase family. CDC2/CDKX subfamily. Component of the SRB8-11 complex, a regulatory module of the Mediator complex. Requires Mg(2+) as cofactor.

It is found in the nucleus. It catalyses the reaction L-seryl-[protein] + ATP = O-phospho-L-seryl-[protein] + ADP + H(+). It carries out the reaction L-threonyl-[protein] + ATP = O-phospho-L-threonyl-[protein] + ADP + H(+). The catalysed reaction is [DNA-directed RNA polymerase] + ATP = phospho-[DNA-directed RNA polymerase] + ADP + H(+). Component of the SRB8-11 complex. The SRB8-11 complex is a regulatory module of the Mediator complex which is itself involved in regulation of basal and activated RNA polymerase II-dependent transcription. The SRB8-11 complex may be involved in the transcriptional repression of a subset of genes regulated by Mediator. It may inhibit the association of the Mediator complex with RNA polymerase II to form the holoenzyme complex. The SRB8-11 complex phosphorylates the C-terminal domain (CTD) of the largest subunit of RNA polymerase II. This Coccidioides immitis (strain RS) (Valley fever fungus) protein is Serine/threonine-protein kinase SSN3 (SSN3).